Consider the following 48-residue polypeptide: Disintegrin accutin (48 aa).

At Gln-1 the chain carries Pyrrolidone carboxylic acid. The 48-residue stretch at 1–48 (QGAQCTAGPCCWPCKFLKEGTICRRARGDDLDDYCNGISADCPRNPYY) folds into the Disintegrin domain. Intrachain disulfides connect Cys-5–Cys-11, Cys-10–Cys-35, and Cys-23–Cys-42. A Cell attachment site motif is present at residues 27–29 (RGD).

It belongs to the venom metalloproteinase (M12B) family. P-II subfamily. P-IIa sub-subfamily. As to quaternary structure, monomer (disintegrin). In terms of tissue distribution, expressed by the venom gland.

The protein localises to the secreted. Inhibit human platelet aggregation induced by ADP, collagen, thrombin or the thromboxane analog U46619 in platelet suspension with IC(50) values of 66-267 nM. Acts by inhibiting fibrinogen interaction with platelet receptors GPIIb/GPIIIa (ITGA2B/ITGB3). It also inhibits angiogenesis in vivo and in vitro by blocking integrin alpha-V/beta-3 (ITGAV/ITGB3) of endothelial cells and by inducing apoptosis. The chain is Disintegrin accutin from Deinagkistrodon acutus (Hundred-pace snake).